Consider the following 366-residue polypeptide: Purple acid phosphatase 3 (366 aa).

An N-terminal signal peptide occupies residues 1–32 (MTYIYRDTKITTKSTIPFLIFFLFCFSNLSMA). Position 81 (D81) interacts with Fe cation. N-linked (GlcNAc...) asparagine glycosylation is present at N89. Fe cation-binding residues include D114 and Y117. D114 provides a ligand contact to Zn(2+). Residues N152 and H246 each contribute to the Zn(2+) site. The active-site Proton donor is the H255. Zn(2+) is bound at residue H281. 281-283 (HDH) is a binding site for substrate. H283 contacts Fe cation.

This sequence belongs to the metallophosphoesterase superfamily. Purple acid phosphatase family. In terms of assembly, homodimer. The cofactor is Fe cation. It depends on Zn(2+) as a cofactor. Expressed in stems, leaves, flowers and siliques.

It localises to the secreted. The catalysed reaction is a phosphate monoester + H2O = an alcohol + phosphate. The polypeptide is Purple acid phosphatase 3 (PAP3) (Arabidopsis thaliana (Mouse-ear cress)).